The primary structure comprises 220 residues: UPF0758 protein APL_1970 (220 aa).

Residues 98-220 form the MPN domain; that stretch reads NINEPYLAVM…YFSFEEEKFR (123 aa). Residues histidine 169, histidine 171, and aspartate 182 each contribute to the Zn(2+) site. The short motif at 169–182 is the JAMM motif element; that stretch reads HNHPSGNCTPSESD.

This sequence belongs to the UPF0758 family.

In Actinobacillus pleuropneumoniae serotype 5b (strain L20), this protein is UPF0758 protein APL_1970.